A 1190-amino-acid polypeptide reads, in one-letter code: Isoleucine--tRNA ligase, cytoplasmic (1190 aa).

Residues 49–59 (PFATGLPHYGH) carry the 'HIGH' region motif. Residues 271 to 299 (DKPKAKLSNGPAGDTKKANPKAKGAKPES) form a disordered region. Positions 632–636 (KMAKK) match the 'KMSKS' region motif. Position 635 (K635) interacts with ATP.

Belongs to the class-I aminoacyl-tRNA synthetase family.

The protein resides in the cytoplasm. Its subcellular location is the cytosol. The enzyme catalyses tRNA(Ile) + L-isoleucine + ATP = L-isoleucyl-tRNA(Ile) + AMP + diphosphate. The protein is Isoleucine--tRNA ligase, cytoplasmic of Arabidopsis thaliana (Mouse-ear cress).